We begin with the raw amino-acid sequence, 835 residues long: Pre-mRNA-splicing factor SYF1 (835 aa).

HAT repeat units lie at residues tyrosine 7–alanine 38, arginine 46–arginine 77, alanine 313–alanine 348, glutamate 414–serine 456, lysine 458–glutamine 494, serine 517–serine 551, asparagine 589–glutamate 623, alanine 628–histidine 664, leucine 707–serine 741, and serine 743–glutamate 777.

Belongs to the crooked-neck family. Associated with the spliceosome.

The protein resides in the nucleus. Functionally, involved in pre-mRNA splicing and cell cycle progression. The sequence is that of Pre-mRNA-splicing factor SYF1 (SYF1) from Candida glabrata (strain ATCC 2001 / BCRC 20586 / JCM 3761 / NBRC 0622 / NRRL Y-65 / CBS 138) (Yeast).